Consider the following 462-residue polypeptide: MGKEKTHINIVVIGHVDSGKSTTTGHLIYKCGGIDKRTIEKFEKEAAEMGKGSFKYAWVLDKLKAERERGITIDISLWKFETSKYYVTIIDAPGHRDFIKNMITGTSQADCAVLIVAAGVGEFEAGISKNGQTREHALLAYTLGVKQLIVGVNKMDSTEPPYSQKRYEEIVKEVSTYIKKIGYNPDTVAFVPISGWNGDNMLEPSANMPWFKGWKVTRKDGNASGTTLLEALDCILPPTRPTDKPLRLPLQDVYKIGGIGTVPVGRVETGVLKPGMVVTFAPVNVTTEVKSVEMHHEALSEALPGDNVGFNVKNVSVKDVRRGNVAGDSKNDPPMEAAGFTAQVIILNHPGQISAGYAPVPDCHTAHIACKFAELKEKIDRRSGKKLEDGPKFLKSGDAAIVDMVPGKPMCVESFSDYPPLGRFAVRDMRQTVAVGVIKAVDKKAAGAGKVTKSAQKAQKAK.

Gly2 is modified (n,N,N-trimethylglycine). Residues Lys5–Thr242 form the tr-type G domain. The interval Gly14–Ser21 is G1. Gly14–Ser21 lines the GTP pocket. Lys36 carries the N6,N6,N6-trimethyllysine; alternate modification. The residue at position 36 (Lys36) is an N6,N6-dimethyllysine; alternate. An N6-methyllysine; alternate modification is found at Lys36. At Lys55 the chain carries N6,N6-dimethyllysine. Positions Gly70–Asp74 are G2. Lys79 is modified (N6,N6,N6-trimethyllysine; by EEF1AKMT1). Positions Asp91–Gly94 are G3. Asn153–Asp156 provides a ligand contact to GTP. The interval Asn153–Asp156 is G4. Position 165 is an N6,N6,N6-trimethyllysine; alternate; by EEF1AKMT3 (Lys165). Lys165 carries the post-translational modification N6,N6-dimethyllysine; alternate; by EEF1AKMT3. N6-acetyllysine; alternate is present on Lys165. The residue at position 165 (Lys165) is an N6-methyllysine; alternate; by EEF1AKMT3. At Lys172 the chain carries N6-acetyllysine. Residue Ser194–Trp196 participates in GTP binding. Residues Ser194–Trp196 form a G5 region. Lys273 carries the N6-acetyllysine modification. Phosphoserine; by TGFBR1 is present on Ser300. Glu301 is modified (5-glutamyl glycerylphosphorylethanolamine). Position 318 is an N6,N6,N6-trimethyllysine; by EEF1AKMT2 (Lys318). Residue Glu374 is modified to 5-glutamyl glycerylphosphorylethanolamine. Lys385 participates in a covalent cross-link: Glycyl lysine isopeptide (Lys-Gly) (interchain with G-Cter in ubiquitin). Residue Lys392 is modified to N6-acetyllysine; alternate. Position 392 is an N6-succinyllysine; alternate (Lys392). The residue at position 432 (Thr432) is a Phosphothreonine; by PASK. Residue Lys439 is modified to N6-acetyllysine.

Belongs to the TRAFAC class translation factor GTPase superfamily. Classic translation factor GTPase family. EF-Tu/EF-1A subfamily. Found in a nuclear export complex with XPO5, EEF1A1, Ran and aminoacylated tRNA. Interacts with PARP1 and TXK. Interacts with KARS1. May interact with ERGIC2. Interacts with IFIT1 (via TPR repeats 4-7). Interacts with DLC1, facilitating distribution to the membrane periphery and ruffles upon growth factor stimulation. Interacts with ZPR1; the interaction occurs in a epidermal growth factor (EGF)-dependent manner. Interacts with PPP1R16B. Interacts with SPHK1 and SPHK2; both interactions increase SPHK1 and SPHK2 kinase activity. Interacts with guanyl-nucleotide exchange factor EEF1B2. Interacts (via middle-region) with HTATIP2 (via N-terminus); the interaction is direct and competes with EEF1A1 binding to guanyl-nucleotide exchange factor EEF1B2, thereby inhibiting GDP for GTP exchange and reactivation of EEF1A1. Interacts with tRNA. ISGylated. In terms of processing, phosphorylated by TXK. Phosphorylation by PASK increases translation efficiency. Phosphorylated by ROCK2. Phosphorylation by TGFBR1 inhibits translation elongation. Post-translationally, trimethylated at Lys-79 by EEF1AKMT1. Methylated at Lys-165 by EEF1AKMT3, methylation by EEF1AKMT3 is dynamic as well as inducible by stress conditions, such as ER-stress, and plays a regulatory role on mRNA translation. Trimethylated at Lys-318 by EEF1AKMT2. Mono-, di-, and trimethylated at Lys-36 by EEF1AKMT4; trimethylated form is predominant. Methylation by EEF1AKMT4 contributes to the fine-tuning of translation rates for a subset of tRNAs. Trimethylated at Gly-2 by METTL13. Mono- and dimethylated at Lys-55 by METTL13; dimethylated form is predominant. Ubiquitinated at Lys-385 by RNF14 in response to ribosome collisions (ribosome stalling), leading to its degradation by the proteasome and rescue of stalled ribosomes.

Its subcellular location is the cytoplasm. The protein resides in the nucleus. It is found in the nucleolus. The protein localises to the cell membrane. The catalysed reaction is GTP + H2O = GDP + phosphate + H(+). In terms of biological role, translation elongation factor that catalyzes the GTP-dependent binding of aminoacyl-tRNA (aa-tRNA) to the A-site of ribosomes during the elongation phase of protein synthesis. Base pairing between the mRNA codon and the aa-tRNA anticodon promotes GTP hydrolysis, releasing the aa-tRNA from EEF1A1 and allowing its accommodation into the ribosome. The growing protein chain is subsequently transferred from the P-site peptidyl tRNA to the A-site aa-tRNA, extending it by one amino acid through ribosome-catalyzed peptide bond formation. Also plays a role in the positive regulation of IFNG transcription in T-helper 1 cells as part of an IFNG promoter-binding complex with TXK and PARP1. Also plays a role in cytoskeleton organization by promoting actin bundling. The sequence is that of Elongation factor 1-alpha 1 (EEF1A1) from Equus caballus (Horse).